Here is a 363-residue protein sequence, read N- to C-terminus: Cobalt-precorrin-5B C(1)-methyltransferase (363 aa).

Belongs to the CbiD family.

It catalyses the reaction Co-precorrin-5B + S-adenosyl-L-methionine = Co-precorrin-6A + S-adenosyl-L-homocysteine. Its pathway is cofactor biosynthesis; adenosylcobalamin biosynthesis; cob(II)yrinate a,c-diamide from sirohydrochlorin (anaerobic route): step 6/10. Catalyzes the methylation of C-1 in cobalt-precorrin-5B to form cobalt-precorrin-6A. This chain is Cobalt-precorrin-5B C(1)-methyltransferase, found in Treponema denticola (strain ATCC 35405 / DSM 14222 / CIP 103919 / JCM 8153 / KCTC 15104).